The following is a 503-amino-acid chain: Maturase K (503 aa).

It belongs to the intron maturase 2 family. MatK subfamily.

It localises to the plastid. The protein localises to the chloroplast. In terms of biological role, usually encoded in the trnK tRNA gene intron. Probably assists in splicing its own and other chloroplast group II introns. In Thryptomene saxicola (Rock thryptomene), this protein is Maturase K.